Reading from the N-terminus, the 576-residue chain is DNA primase (576 aa).

A CHC2-type zinc finger spans residues 40 to 64 (CPFHNEKTPSFNVVAKKQFYHCFGC). The Toprim domain occupies 251–333 (DSIIVVEGYM…GLDAGFIFLP (83 aa)). Mg(2+) contacts are provided by Glu-257, Asp-301, and Asp-303.

This sequence belongs to the DnaG primase family. As to quaternary structure, monomer. Interacts with DnaB. The cofactor is Zn(2+). It depends on Mg(2+) as a cofactor.

The catalysed reaction is ssDNA + n NTP = ssDNA/pppN(pN)n-1 hybrid + (n-1) diphosphate.. In terms of biological role, RNA polymerase that catalyzes the synthesis of short RNA molecules used as primers for DNA polymerase during DNA replication. The polypeptide is DNA primase (Legionella pneumophila).